A 284-amino-acid polypeptide reads, in one-letter code: MIVVSGSQSQNLAFKVAKLLNTKLTRVEYKRFPDNEIYVRIVDEINDDEAVIINTQKNQNDAIVETILLCDALRDEGVKKITLVAPYLAYARQDKKFNPGEAISIRALAKIYSNIVDKLITINPHETHIKDFFTIPFIYGDAVPKLAEYVKDKLNDPIVLAPDKGALEFAKTASKILNAEYDYLEKTRLSPTEIQIAPKTLDAKDRDVFIVDDIISTGGTMATAVKLLKEQGAKKIIAACVHPVLIGDALNKLYSAGVEEVVGTDTYLSEVSKVSVAEVIVDLL.

ATP contacts are provided by residues 34-36 and 92-93; these read DNE and RQ. Mg(2+) contacts are provided by histidine 125 and aspartate 163. Residue lysine 186 is part of the active site. Residues arginine 188, aspartate 212, and 216 to 220 each bind D-ribose 5-phosphate; that span reads STGGT.

The protein belongs to the ribose-phosphate pyrophosphokinase family. Class III (archaeal) subfamily. In terms of assembly, homotetramer. The cofactor is Mg(2+).

Its subcellular location is the cytoplasm. It catalyses the reaction D-ribose 5-phosphate + ATP = 5-phospho-alpha-D-ribose 1-diphosphate + AMP + H(+). Its pathway is metabolic intermediate biosynthesis; 5-phospho-alpha-D-ribose 1-diphosphate biosynthesis; 5-phospho-alpha-D-ribose 1-diphosphate from D-ribose 5-phosphate (route I): step 1/1. With respect to regulation, activated by inorganic phosphate, with a maximal activity at 190 mM. Above this concentration inorganic phosphate progressively inhibits the kinase. Completely inhibited by ADP, and partially inhibited by alpha,beta-methylene ATP (mATP). Lack of allosteric regulation. Functionally, involved in the biosynthesis of the central metabolite phospho-alpha-D-ribosyl-1-pyrophosphate (PRPP) via the transfer of pyrophosphoryl group from ATP to 1-hydroxyl of ribose-5-phosphate (Rib-5-P). It can also use dATP as diphosphoryl donor. The protein is Ribose-phosphate pyrophosphokinase of Methanocaldococcus jannaschii (strain ATCC 43067 / DSM 2661 / JAL-1 / JCM 10045 / NBRC 100440) (Methanococcus jannaschii).